A 309-amino-acid polypeptide reads, in one-letter code: Protoheme IX farnesyltransferase 2 (309 aa).

Transmembrane regions (helical) follow at residues 35–55 (FKVV…APDV), 59–79 (MGVQ…AAVI), 107–127 (AHAL…LMLW), 131–151 (LTAI…TSFL), 159–179 (IVIG…SETG), 186–206 (WLLV…LAIA), 238–258 (LLAI…IYLI), and 289–309 (FSII…WLLL).

The protein belongs to the UbiA prenyltransferase family. Protoheme IX farnesyltransferase subfamily.

Its subcellular location is the cell inner membrane. The enzyme catalyses heme b + (2E,6E)-farnesyl diphosphate + H2O = Fe(II)-heme o + diphosphate. It functions in the pathway porphyrin-containing compound metabolism; heme O biosynthesis; heme O from protoheme: step 1/1. In terms of biological role, converts heme B (protoheme IX) to heme O by substitution of the vinyl group on carbon 2 of heme B porphyrin ring with a hydroxyethyl farnesyl side group. This Pseudoalteromonas translucida (strain TAC 125) protein is Protoheme IX farnesyltransferase 2.